The primary structure comprises 357 residues: Biotin synthase (357 aa).

The tract at residues 1–27 is disordered; it reads MTTAETKPATETGENAGTTGTAGTAAT. Low complexity predominate over residues 9–27; sequence ATETGENAGTTGTAGTAAT. In terms of domain architecture, Radical SAM core spans 78 to 303; that stretch reads DAVEMEGIIS…RQLLRFAGGR (226 aa). [4Fe-4S] cluster contacts are provided by cysteine 93, cysteine 97, and cysteine 100. Cysteine 136, cysteine 228, and arginine 298 together coordinate [2Fe-2S] cluster.

The protein belongs to the radical SAM superfamily. Biotin synthase family. In terms of assembly, homodimer. Requires [4Fe-4S] cluster as cofactor. The cofactor is [2Fe-2S] cluster.

The enzyme catalyses (4R,5S)-dethiobiotin + (sulfur carrier)-SH + 2 reduced [2Fe-2S]-[ferredoxin] + 2 S-adenosyl-L-methionine = (sulfur carrier)-H + biotin + 2 5'-deoxyadenosine + 2 L-methionine + 2 oxidized [2Fe-2S]-[ferredoxin]. Its pathway is cofactor biosynthesis; biotin biosynthesis; biotin from 7,8-diaminononanoate: step 2/2. Catalyzes the conversion of dethiobiotin (DTB) to biotin by the insertion of a sulfur atom into dethiobiotin via a radical-based mechanism. This Corynebacterium jeikeium (strain K411) protein is Biotin synthase.